The sequence spans 245 residues: Probable phosphatase ECA2529 (245 aa).

Zn(2+) is bound by residues His7, His9, His15, His40, Glu73, His101, His131, Asp192, and His194.

Belongs to the PHP family. In terms of assembly, homotrimer. Zn(2+) is required as a cofactor.

This chain is Probable phosphatase ECA2529, found in Pectobacterium atrosepticum (strain SCRI 1043 / ATCC BAA-672) (Erwinia carotovora subsp. atroseptica).